We begin with the raw amino-acid sequence, 216 residues long: Ras-related protein Rab-5C (216 aa).

GTP is bound by residues Ser-30, Ala-31, Gly-33, Lys-34, Ser-35, Ser-36, His-47, Glu-48, Thr-53, Gly-79, Asn-134, Lys-135, Asp-137, Ala-165, and Lys-166. Ser-35 serves as a coordination point for Mg(2+). 2 short sequence motifs (switch) span residues 45-57 (QFHEYQESTIGAA) and 78-94 (AGQERYHSLAPMYYRGA). Residue Thr-53 participates in Mg(2+) binding. The tract at residues 184 to 216 (KNEPQNAPGGPGRNRVVDLQESSQPSRSQCCSN) is disordered. Polar residues predominate over residues 203–216 (QESSQPSRSQCCSN). S-geranylgeranyl cysteine attachment occurs at residues Cys-213 and Cys-214.

It belongs to the small GTPase superfamily. Rab family. It depends on Mg(2+) as a cofactor. As to expression, detected in brain, ovary, rectum, small intestine, large intestine, liver, spleen, follicle and kidney (at protein level).

The protein localises to the cell membrane. The protein resides in the early endosome membrane. The enzyme catalyses GTP + H2O = GDP + phosphate + H(+). Regulated by guanine nucleotide exchange factors (GEFs) which promote the exchange of bound GDP for free GTP. Regulated by GTPase activating proteins (GAPs) which increase the GTP hydrolysis activity. Inhibited by GDP dissociation inhibitors (GDIs). The small GTPases Rab are key regulators of intracellular membrane trafficking, from the formation of transport vesicles to their fusion with membranes. Rabs cycle between an inactive GDP-bound form and an active GTP-bound form that is able to recruit to membranes different sets of downstream effectors directly responsible for vesicle formation, movement, tethering and fusion. In Gallus gallus (Chicken), this protein is Ras-related protein Rab-5C (RAB5C).